Here is a 195-residue protein sequence, read N- to C-terminus: Dual-action ribosomal maturation protein DarP (195 aa).

Belongs to the DarP family.

Its subcellular location is the cytoplasm. In terms of biological role, member of a network of 50S ribosomal subunit biogenesis factors which assembles along the 30S-50S interface, preventing incorrect 23S rRNA structures from forming. Promotes peptidyl transferase center (PTC) maturation. The sequence is that of Dual-action ribosomal maturation protein DarP from Stenotrophomonas maltophilia (strain K279a).